The chain runs to 336 residues: Cytosolic 5'-nucleotidase 3A (336 aa).

The active-site Nucleophile is D88. 2 residues coordinate Mg(2+): D88 and D90. Residue D90 is the Proton donor of the active site. E135 is a CMP binding site. Residues E135 and S156 each contribute to the N(7)-methyl-GMP site. Substrate-binding positions include 203–204 and K252; that span reads SA. D277 provides a ligand contact to Mg(2+). S278 bears the Phosphoserine mark.

It belongs to the pyrimidine 5'-nucleotidase family. Monomer. As to expression, isoforms 1, 3 and 4 are expressed in reticulocytes. Isoform 4 is hardly detectable in bone marrow and fetal liver.

It is found in the cytoplasm. The protein localises to the endoplasmic reticulum. It catalyses the reaction N(7)-methyl-GMP + H2O = N(7)-methylguanosine + phosphate. The catalysed reaction is CMP + H2O = cytidine + phosphate. It carries out the reaction a ribonucleoside 5'-phosphate + H2O = a ribonucleoside + phosphate. In terms of biological role, nucleotidase which shows specific activity towards cytidine monophosphate (CMP) and 7-methylguanosine monophosphate (m(7)GMP). CMP seems to be the preferred substrate. The sequence is that of Cytosolic 5'-nucleotidase 3A (NT5C3A) from Homo sapiens (Human).